Reading from the N-terminus, the 323-residue chain is o-succinylbenzoate synthase (323 aa).

Lys134 (proton donor) is an active-site residue. Asp162, Glu191, and Asp214 together coordinate Mg(2+). Catalysis depends on Lys236, which acts as the Proton acceptor.

This sequence belongs to the mandelate racemase/muconate lactonizing enzyme family. MenC type 1 subfamily. A divalent metal cation is required as a cofactor.

The enzyme catalyses (1R,6R)-6-hydroxy-2-succinyl-cyclohexa-2,4-diene-1-carboxylate = 2-succinylbenzoate + H2O. It functions in the pathway quinol/quinone metabolism; 1,4-dihydroxy-2-naphthoate biosynthesis; 1,4-dihydroxy-2-naphthoate from chorismate: step 4/7. It participates in quinol/quinone metabolism; menaquinone biosynthesis. Functionally, converts 2-succinyl-6-hydroxy-2,4-cyclohexadiene-1-carboxylate (SHCHC) to 2-succinylbenzoate (OSB). The polypeptide is o-succinylbenzoate synthase (Edwardsiella ictaluri (strain 93-146)).